A 225-amino-acid polypeptide reads, in one-letter code: Non-structural protein V (225 aa).

The segment covering 145-157 (SNEPVSSAGSAQD) has biased composition (polar residues). Residues 145–173 (SNEPVSSAGSAQDPNFKRGGANRERARGN) form a disordered region. His-174, Cys-193, Cys-197, Cys-209, Cys-211, Cys-214, Cys-218, and Cys-221 together coordinate Zn(2+).

The protein belongs to the paramyxoviruses V protein family. Interacts with host IFIH1/MDA5 and DHX58/LGP2. Forms with host DDB1, CUL4A, STAT1 and STAT2 the HPIV2 virus V-dependent complex (VDC); this complex targets host STAT2 to proteasomal degradation.

Its subcellular location is the host nucleus. Plays an essential role in the inhibition of host immune response. Prevents the establishment of cellular antiviral state by blocking interferon-alpha/beta (IFN-alpha/beta) production and signaling pathway. Interacts with host IFIH1/MDA5 and DHX58/LGP2 to inhibit the transduction pathway involved in the activation of IFN-beta promoter, thus protecting the virus against cell antiviral state. Efficiently blocks type I IFN signaling following infection by targeting host STAT2 for proteasomal degradation. Also plays a role in viral growth by promoting host RhoA-induced F-actin formation. The polypeptide is Non-structural protein V (P/V) (Homo sapiens (Human)).